The sequence spans 684 residues: Methionine--tRNA ligase (684 aa).

The 'HIGH' region signature appears at 14–24; it reads PYANGAIHLGH. Residues C145, C148, C158, and C161 each contribute to the Zn(2+) site. Residues 330–334 carry the 'KMSKS' region motif; sequence KMSKS. K333 lines the ATP pocket. The region spanning 582-684 is the tRNA-binding domain; that stretch reads DFAKLDLRVA…CGIRPGMQVK (103 aa).

Belongs to the class-I aminoacyl-tRNA synthetase family. MetG type 1 subfamily. Homodimer. It depends on Zn(2+) as a cofactor.

The protein resides in the cytoplasm. The catalysed reaction is tRNA(Met) + L-methionine + ATP = L-methionyl-tRNA(Met) + AMP + diphosphate. Its function is as follows. Is required not only for elongation of protein synthesis but also for the initiation of all mRNA translation through initiator tRNA(fMet) aminoacylation. The polypeptide is Methionine--tRNA ligase (Haemophilus ducreyi (strain 35000HP / ATCC 700724)).